The sequence spans 209 residues: Lectin (209 aa).

Homodimer; non-covalently linked.

Functionally, binds chito-oligosaccherides. Has hemagglutinating activity towards rabbit erythrocytes. The polypeptide is Lectin (Luffa acutangula (Ridged gourd)).